A 404-amino-acid chain; its full sequence is CinA-like protein (404 aa).

This sequence belongs to the CinA family.

This chain is CinA-like protein, found in Deinococcus radiodurans (strain ATCC 13939 / DSM 20539 / JCM 16871 / CCUG 27074 / LMG 4051 / NBRC 15346 / NCIMB 9279 / VKM B-1422 / R1).